Consider the following 134-residue polypeptide: 6,7-dimethyl-8-ribityllumazine synthase (134 aa).

5-amino-6-(D-ribitylamino)uracil is bound by residues Phe-12, 44-46 (VFD), and 68-70 (SVI). 73–74 (DT) contributes to the (2S)-2-hydroxy-3-oxobutyl phosphate binding site. His-76 serves as the catalytic Proton donor. Leu-101 lines the 5-amino-6-(D-ribitylamino)uracil pocket. Arg-116 is a (2S)-2-hydroxy-3-oxobutyl phosphate binding site.

This sequence belongs to the DMRL synthase family.

The enzyme catalyses (2S)-2-hydroxy-3-oxobutyl phosphate + 5-amino-6-(D-ribitylamino)uracil = 6,7-dimethyl-8-(1-D-ribityl)lumazine + phosphate + 2 H2O + H(+). Its pathway is cofactor biosynthesis; riboflavin biosynthesis; riboflavin from 2-hydroxy-3-oxobutyl phosphate and 5-amino-6-(D-ribitylamino)uracil: step 1/2. In terms of biological role, catalyzes the formation of 6,7-dimethyl-8-ribityllumazine by condensation of 5-amino-6-(D-ribitylamino)uracil with 3,4-dihydroxy-2-butanone 4-phosphate. This is the penultimate step in the biosynthesis of riboflavin. This Methanosarcina barkeri (strain Fusaro / DSM 804) protein is 6,7-dimethyl-8-ribityllumazine synthase.